The primary structure comprises 384 residues: uncharacterized protein (384 aa).

The protein to S.pombe SpAC2E11.17.

This is an uncharacterized protein from Schizosaccharomyces pombe (strain 972 / ATCC 24843) (Fission yeast).